The following is a 138-amino-acid chain: MERTLSIIKPDGVKKNLIGEVVKRFQDQGIHIAALKMMQLTQKQAQGFYAVHRERPFFNSLTEFMTSGPIVVMVLEGDDVIAKNRKLMGATNFKEAEEGTIRRDFATDIEKNVVHGSDAPETAAFEIGYFFNDMEIVG.

Lys9, Phe57, Arg85, Thr91, Arg102, and Asn112 together coordinate ATP. His115 (pros-phosphohistidine intermediate) is an active-site residue.

Belongs to the NDK family. In terms of assembly, homotetramer. The cofactor is Mg(2+).

Its subcellular location is the cytoplasm. The enzyme catalyses a 2'-deoxyribonucleoside 5'-diphosphate + ATP = a 2'-deoxyribonucleoside 5'-triphosphate + ADP. It carries out the reaction a ribonucleoside 5'-diphosphate + ATP = a ribonucleoside 5'-triphosphate + ADP. Its function is as follows. Major role in the synthesis of nucleoside triphosphates other than ATP. The ATP gamma phosphate is transferred to the NDP beta phosphate via a ping-pong mechanism, using a phosphorylated active-site intermediate. In Desulforapulum autotrophicum (strain ATCC 43914 / DSM 3382 / VKM B-1955 / HRM2) (Desulfobacterium autotrophicum), this protein is Nucleoside diphosphate kinase.